The primary structure comprises 539 residues: Polyol transporter 5 (539 aa).

Over residues 1–11 the composition is skewed to polar residues; the sequence is MTGATPENRTA. Residues 1–24 are disordered; the sequence is MTGATPENRTAPSPPPVKHVPESV. Transmembrane regions (helical) follow at residues 37–57, 73–93, 104–124, 127–147, 165–185, 196–216, 296–316, 333–353, 364–384, 391–411, 433–453, and 463–483; these read FACA…IGVM, LQIG…SCAA, YTIV…GLSP, AFLM…LMIA, SFPE…NLAF, LMLG…LAMP, IAAI…VVLF, LLAT…ATFL, LTSV…LTII, VMWA…TFSI, GSSM…ISFL, and GAFY…YTFL. 2 stretches are compositionally biased toward basic and acidic residues: residues 503 to 514 and 530 to 539; these read WRDSKSKPKGNP and QWKEGDTQSS. The tract at residues 503 to 539 is disordered; that stretch reads WRDSKSKPKGNPEKTVPNPEVEIGSNKQWKEGDTQSS.

It belongs to the major facilitator superfamily. Sugar transporter (TC 2.A.1.1) family. In terms of tissue distribution, highly expressed in roots. Expressed in vascular tissue of leaves, sepals and siliques.

It localises to the cell membrane. Functionally, plasma membrane broad-spectrum sugar-proton symporter. Mediates the uptake of linear polyols such as sorbitol, xylitol, erythritol or glycerol. Can transport the cyclic polyol myo-inositol and different hexoses, pentoses (including ribose), tetroses and sugar alcohols. This chain is Polyol transporter 5 (PLT5), found in Arabidopsis thaliana (Mouse-ear cress).